Consider the following 673-residue polypeptide: UvrABC system protein B (673 aa).

In terms of domain architecture, Helicase ATP-binding spans 26–183 (ANFEAGLAKQ…RHLTDLQYTR (158 aa)). ATP is bound at residue 39 to 46 (GVTGSGKT). The Beta-hairpin motif lies at 92–115 (YYDYYQPEAYVPSSDTFIEKDSSI). Positions 431 to 597 (QVDDLMSEIH…SVERPISDIM (167 aa)) constitute a Helicase C-terminal domain. The tract at residues 601 to 631 (REDAAEKKSGKGRSKSRQVAEETPDYRAMKP) is disordered. A compositionally biased stretch (basic and acidic residues) spans 618-630 (QVAEETPDYRAMK). The UVR domain occupies 635-670 (AGKLKSLEQKMYQHAKDLEFEAAAQIRDQIQKLKTA).

It belongs to the UvrB family. Forms a heterotetramer with UvrA during the search for lesions. Interacts with UvrC in an incision complex.

Its subcellular location is the cytoplasm. In terms of biological role, the UvrABC repair system catalyzes the recognition and processing of DNA lesions. A damage recognition complex composed of 2 UvrA and 2 UvrB subunits scans DNA for abnormalities. Upon binding of the UvrA(2)B(2) complex to a putative damaged site, the DNA wraps around one UvrB monomer. DNA wrap is dependent on ATP binding by UvrB and probably causes local melting of the DNA helix, facilitating insertion of UvrB beta-hairpin between the DNA strands. Then UvrB probes one DNA strand for the presence of a lesion. If a lesion is found the UvrA subunits dissociate and the UvrB-DNA preincision complex is formed. This complex is subsequently bound by UvrC and the second UvrB is released. If no lesion is found, the DNA wraps around the other UvrB subunit that will check the other stand for damage. This Xanthomonas oryzae pv. oryzae (strain PXO99A) protein is UvrABC system protein B.